Here is a 140-residue protein sequence, read N- to C-terminus: Anti-sigma F factor (140 aa).

The protein belongs to the anti-sigma-factor family.

The catalysed reaction is L-seryl-[protein] + ATP = O-phospho-L-seryl-[protein] + ADP + H(+). It carries out the reaction L-threonyl-[protein] + ATP = O-phospho-L-threonyl-[protein] + ADP + H(+). Functionally, binds to sigma F and blocks its ability to form an RNA polymerase holoenzyme (E-sigma F). Phosphorylates SpoIIAA on a serine residue. This phosphorylation may enable SpoIIAA to act as an anti-anti-sigma factor that counteracts SpoIIAB and thus releases sigma F from inhibition. The protein is Anti-sigma F factor of Clostridium perfringens (strain ATCC 13124 / DSM 756 / JCM 1290 / NCIMB 6125 / NCTC 8237 / Type A).